Here is a 56-residue protein sequence, read N- to C-terminus: Small ribosomal subunit protein uS14 (56 aa).

C21, C24, C39, and C42 together coordinate Zn(2+).

Belongs to the universal ribosomal protein uS14 family. In terms of assembly, component of the 40S small ribosomal subunit. The cofactor is Zn(2+).

The protein resides in the cytoplasm. The protein localises to the cytosol. Its subcellular location is the rough endoplasmic reticulum. This Ixodes scapularis (Black-legged tick) protein is Small ribosomal subunit protein uS14 (RpS29).